The primary structure comprises 488 residues: Tocopherol cyclase, chloroplastic (488 aa).

The transit peptide at 1 to 76 directs the protein to the chloroplast; that stretch reads MEIRSLIVSM…VPTSPNRELR (76 aa).

The protein resides in the plastid. It is found in the chloroplast. Its subcellular location is the plastoglobule. It catalyses the reaction delta-tocopherol = 2-methyl-6-phytyl-1,4-benzene-1,4-diol. The catalysed reaction is gamma-tocopherol = 2,3-dimethyl-6-phytylbenzene-1,4-diol. The enzyme catalyses delta-tocotrienol = 6-geranylgeranyl-2-methylbenzene-1,4-diol. It carries out the reaction gamma-tocotrienol = 6-geranylgeranyl-2,3-dimethylbenzene-1,4-diol. The protein operates within cofactor biosynthesis; tocopherol biosynthesis. Its function is as follows. Involved in the synthesis of both tocopherols and tocotrienols (vitamin E), which presumably protect photosynthetic complexes from oxidative stress. Catalyzes the conversion of 2-methyl-6-phytyl-1,4-hydroquinone and 2,3-dimethyl-5-phytyl-1,4-hydroquinone (DMPQ) to delta- and gamma-tocopherol respectively. Also converts 2,3-dimethyl-5-geranylgeranyl-1,4-hydroquinone (DMGQ) to gamma-tocotrienol. This Arabidopsis thaliana (Mouse-ear cress) protein is Tocopherol cyclase, chloroplastic (VTE1).